The following is a 754-amino-acid chain: Probable TonB-dependent siderophore receptor PirA (754 aa).

Positions Met1–Ala24 are cleaved as a signal peptide. The TBDR plug domain maps to Glu54–Lys181. A TBDR beta-barrel domain is found at Glu186–Phe754. A compositionally biased stretch (polar residues) spans Val404–Gly414. A disordered region spans residues Val404–Gly424. Cys511 and Cys519 are joined by a disulfide. Residues Gln737–Phe754 carry the TonB C-terminal box motif.

It belongs to the TonB-dependent receptor family.

It is found in the cell outer membrane. Its function is as follows. Probably involved in the initial step of iron uptake by binding iron chelating siderophores, thereby allowing extraction of iron from the environment. May bind the siderophore, ferric enterobactin, with micromolar affinity. The polypeptide is Probable TonB-dependent siderophore receptor PirA (Acinetobacter baumannii (strain ATCC 19606 / DSM 30007 / JCM 6841 / CCUG 19606 / CIP 70.34 / NBRC 109757 / NCIMB 12457 / NCTC 12156 / 81)).